We begin with the raw amino-acid sequence, 326 residues long: Polycomb complex protein BMI-1 (326 aa).

The RING-type zinc finger occupies cysteine 18–aspartate 57. The Nuclear localization signal signature appears at lysine 81–arginine 95. The tract at residues arginine 162–lysine 182 is interaction with PHC2. Residues leucine 164–arginine 228 form an interaction with E4F1 region. Positions isoleucine 236–glycine 326 are disordered. 3 stretches are compositionally biased toward low complexity: residues proline 266–proline 278, serine 290–asparagine 303, and serine 315–glycine 326.

As to quaternary structure, component of a PRC1-like complex. Identified in a PRC1-like HPRC-H complex with CBX2, CBX4, CBX8, PHC1, PHC2, PHC3 RING1 and RNF2. Interacts with RNF2/RING2. Interacts with RING1. Part of a complex that contains RNF2, UB2D3 and BMI1, where RNF2 and BMI1 form a tight heterodimer, and UB2D3 interacts only with RNF2. The complex composed of RNF2, UB2D3 and BMI1 binds nucleosomes, and has activity only with nucleosomal histone H2A. Interacts with CBX7 and CBX8. Interacts with SPOP. Part of a complex consisting of BMI1, CUL3 and SPOP. Interacts with E4F1. Interacts with PHC2. Interacts with zinc finger protein ZNF277. May be part of a complex including at least ZNF277, BMI1 and RNF2/RING2. May be polyubiquitinated; which does not lead to proteasomal degradation. Monoubiquitinated.

Its subcellular location is the nucleus. The protein localises to the cytoplasm. In terms of biological role, component of a Polycomb group (PcG) multiprotein PRC1-like complex, a complex class required to maintain the transcriptionally repressive state of many genes, including Hox genes, throughout development. PcG PRC1 complex acts via chromatin remodeling and modification of histones; it mediates monoubiquitination of histone H2A 'Lys-119', rendering chromatin heritably changed in its expressibility. The complex composed of RNF2, UB2D3 and BMI1 binds nucleosomes, and has activity only with nucleosomal histone H2A. In the PRC1-like complex, regulates the E3 ubiquitin-protein ligase activity of RNF2/RING2. This Bos taurus (Bovine) protein is Polycomb complex protein BMI-1 (BMI1).